The chain runs to 1066 residues: DNA primase (1066 aa).

A disordered region spans residues D694–D727. Acidic residues predominate over residues G715 to P725. The segment at C995 to C1035 adopts a CHC2-type zinc-finger fold.

The protein belongs to the herpesviridae DNA primase family. Associates with the helicase and the primase-associated factor to form the helicase-primase factor.

It is found in the host nucleus. In terms of biological role, essential component of the helicase/primase complex. Unwinds the DNA at the replication forks and generates single-stranded DNA for both leading and lagging strand synthesis. The primase initiates primer synthesis and thereby produces large amount of short RNA primers on the lagging strand that the polymerase elongates using dNTPs. The protein is DNA primase of Human herpesvirus 2 (strain HG52) (HHV-2).